A 236-amino-acid chain; its full sequence is Large ribosomal subunit protein uL2 (236 aa).

The disordered stretch occupies residues 198–236 (DHPFGGGGRQHPGRPKTVSRGTPPGRKVGSIAARRTGKR).

It belongs to the universal ribosomal protein uL2 family. In terms of assembly, part of the 50S ribosomal subunit. Forms a bridge to the 30S subunit in the 70S ribosome.

Functionally, one of the primary rRNA binding proteins. Required for association of the 30S and 50S subunits to form the 70S ribosome, for tRNA binding and peptide bond formation. It has been suggested to have peptidyltransferase activity; this is somewhat controversial. Makes several contacts with the 16S rRNA in the 70S ribosome. This Methanothrix thermoacetophila (strain DSM 6194 / JCM 14653 / NBRC 101360 / PT) (Methanosaeta thermophila) protein is Large ribosomal subunit protein uL2.